The primary structure comprises 242 residues: Caffeoyl-CoA O-methyltransferase 3 (242 aa).

Residue Lys-16 coordinates substrate. Residues Thr-58, Glu-80, 82-83, Ser-88, Asp-106, and Ala-135 each bind S-adenosyl-L-methionine; that span reads GV. Residue Asp-158 participates in substrate binding. Asp-158 lines the a divalent metal cation pocket. Asp-160 is an S-adenosyl-L-methionine binding site. Positions 184 and 185 each coordinate a divalent metal cation. Substrate is bound at residue Asn-189.

It belongs to the class I-like SAM-binding methyltransferase superfamily. Cation-dependent O-methyltransferase family. CCoAMT subfamily. Requires Mg(2+) as cofactor. In terms of tissue distribution, mostly expressed in the bottom and middle parts of the stems.

The catalysed reaction is (E)-caffeoyl-CoA + S-adenosyl-L-methionine = (E)-feruloyl-CoA + S-adenosyl-L-homocysteine + H(+). The protein operates within aromatic compound metabolism; phenylpropanoid biosynthesis. Functionally, methylates caffeoyl-CoA to feruloyl-CoA and 5-hydroxyferuloyl-CoA to sinapoyl-CoA. Plays a role in the synthesis of feruloylated polysaccharides. Involved in the reinforcement of the plant cell wall. Also involved in the responding to wounding or pathogen challenge by the increased formation of cell wall-bound ferulic acid polymers. Also methylates free caffeic and 5-hydroxyferulic acids. This is Caffeoyl-CoA O-methyltransferase 3 (CCOAOMT3) from Nicotiana tabacum (Common tobacco).